The chain runs to 205 residues: Protein phosphatase inhibitor 2 (205 aa).

The segment at 1–44 (MAASTASHRPIKGILKNKTSTTSSVVASAEQPRRTVEEELSKKS) is disordered. Ala2 is subject to N-acetylalanine. The tract at residues 12-17 (KGILKN) is required for binding PPP1CC. Positions 19 to 29 (TSTTSSVVASA) are enriched in low complexity. Basic and acidic residues predominate over residues 31-44 (QPRRTVEEELSKKS). Residues 43-55 (KSQKWDEMNILAT) form a required for binding PPP1CC region. Ser44 is subject to Phosphoserine; by ATM. At Thr73 the chain carries Phosphothreonine; by GSK3. Residues Ser87 and Ser89 each carry the phosphoserine modification. Residues Thr96 and Thr116 each carry the phosphothreonine modification. Residues 104–142 (LAAAEGSEPKFRTREQESSGEEDNDLSPEEREKKRQFEM) are disordered. The span at 110 to 120 (SEPKFRTREQE) shows a compositional bias: basic and acidic residues. A phosphoserine mark is found at Ser121, Ser122, and Ser130. A compositionally biased stretch (acidic residues) spans 121–130 (SSGEEDNDLS). Residues 131–142 (PEEREKKRQFEM) are compositionally biased toward basic and acidic residues. The required for binding PPP1CC catalytic center, displacing metal ions and inhibition of PPP1CC catalytic activity stretch occupies residues 147–150 (HYNE). Residues 163 to 205 (KDLHDDDEDEEMSETADADSMNIEESNQGSTAGDHLQHKSQSS) are disordered. Residues 167 to 179 (DDDEDEEMSETAD) show a composition bias toward acidic residues.

The protein belongs to the protein phosphatase inhibitor 2 family. As to quaternary structure, heterodimer with PP1. Phosphorylation on Ser-44 by ATM activates PP1 by dissociating the PP1-PPP1R2 complex. Phosphorylation on Thr-73 by GSK3 activates PP1 by dissociating the PP1-PPP1R2 complex. Central nervous system.

Functionally, inhibitor of protein-phosphatase 1. This is Protein phosphatase inhibitor 2 (Ppp1r2) from Rattus norvegicus (Rat).